The following is a 207-amino-acid chain: Chaperone protein TorD (207 aa).

It belongs to the TorD/DmsD family. TorD subfamily.

The protein resides in the cytoplasm. Involved in the biogenesis of TorA. Acts on TorA before the insertion of the molybdenum cofactor and, as a result, probably favors a conformation of the apoenzyme that is competent for acquiring the cofactor. This Aggregatibacter aphrophilus (strain NJ8700) (Haemophilus aphrophilus) protein is Chaperone protein TorD.